The following is a 154-amino-acid chain: uncharacterized protein (154 aa).

The N-terminal stretch at 1 to 33 is a signal peptide; sequence MTKRGIQAFAGGIILATAVLAAVFYLTDEDQAA.

This is an uncharacterized protein from Bacillus subtilis (strain 168).